The chain runs to 435 residues: Serine/threonine-protein kinase 40 (435 aa).

Residues 35 to 332 form the Protein kinase domain; that stretch reads FILGPRLGNS…EELDSLSSII (298 aa). ATP contacts are provided by residues 41–49 and Lys66; that span reads LGNSPVPSI. Catalysis depends on Asp197, which acts as the Proton acceptor.

This sequence belongs to the protein kinase superfamily. CAMK Ser/Thr protein kinase family.

The protein localises to the nucleus. It localises to the cytoplasm. It carries out the reaction L-seryl-[protein] + ATP = O-phospho-L-seryl-[protein] + ADP + H(+). The enzyme catalyses L-threonyl-[protein] + ATP = O-phospho-L-threonyl-[protein] + ADP + H(+). Functionally, may be a negative regulator of NF-kappa-B and p53-mediated gene transcription. The chain is Serine/threonine-protein kinase 40 (STK40) from Gallus gallus (Chicken).